A 406-amino-acid chain; its full sequence is Pyridinium-3,5-bisthiocarboxylic acid mononucleotide nickel insertion protein (406 aa).

It belongs to the LarC family.

The enzyme catalyses Ni(II)-pyridinium-3,5-bisthiocarboxylate mononucleotide = pyridinium-3,5-bisthiocarboxylate mononucleotide + Ni(2+). Its function is as follows. Involved in the biosynthesis of a nickel-pincer cofactor ((SCS)Ni(II) pincer complex). Binds Ni(2+), and functions in nickel delivery to pyridinium-3,5-bisthiocarboxylic acid mononucleotide (P2TMN), to form the mature cofactor. Is thus probably required for the activation of nickel-pincer cofactor-dependent enzymes. The sequence is that of Pyridinium-3,5-bisthiocarboxylic acid mononucleotide nickel insertion protein from Akkermansia muciniphila (strain ATCC BAA-835 / DSM 22959 / JCM 33894 / BCRC 81048 / CCUG 64013 / CIP 107961 / Muc).